The chain runs to 405 residues: Angiopoietin-related protein 4 (405 aa).

The first 23 residues, 1-23 (MRCAPTAGAALVLCAATAGLLSA), serve as a signal peptide directing secretion. The stretch at 54–146 (GLREHVERTR…QNLQSQIDLL (93 aa)) forms a coiled coil. The N-linked (GlcNAc...) asparagine glycan is linked to asparagine 176. The Fibrinogen C-terminal domain occupies 178-400 (TRLHRPPRDC…ATTLLIQPME (223 aa)). Cysteine 187 and cysteine 215 are oxidised to a cystine. N-linked (GlcNAc...) asparagine glycans are attached at residues asparagine 231 and asparagine 237. Cysteine 340 and cysteine 353 are joined by a disulfide.

In terms of assembly, homooligomer; disulfide-linked via Cys residues in the N-terminal part of the protein. The homooligomer undergoes proteolytic processing to release its carboxyl fibrinogen-like domain, which circulates as a monomer. The homooligomer unprocessed form is able to interact with the extracellular matrix. In terms of processing, N-glycosylated. Post-translationally, forms disulfide-linked dimers and tetramers. Cleaved into a smaller N-terminal chain and a larger chain that contains the fibrinogen C-terminal domain; both cleaved and uncleaved forms are detected in the extracellular space. The cleaved form is not present within the cell.

The protein resides in the secreted. It is found in the extracellular space. Its subcellular location is the extracellular matrix. Mediates inactivation of the lipoprotein lipase LPL, and thereby plays a role in the regulation of triglyceride clearance from the blood serum and in lipid metabolism. May also play a role in regulating glucose homeostasis and insulin sensitivity. Inhibits proliferation, migration, and tubule formation of endothelial cells and reduces vascular leakage. Upon heterologous expression, inhibits the adhesion of endothelial cell to the extracellular matrix (ECM), and inhibits the reorganization of the actin cytoskeleton, formation of actin stress fibers and focal adhesions in endothelial cells that have adhered to ANGPTL4-containing ECM (in vitro). Depending on context, may modulate tumor-related angiogenesis. Functionally, mediates inactivation of the lipoprotein lipase LPL, and thereby plays an important role in the regulation of triglyceride clearance from the blood serum and in lipid metabolism. Has higher activity in LPL inactivation than the uncleaved protein. This is Angiopoietin-related protein 4 (Angptl4) from Rattus norvegicus (Rat).